The sequence spans 391 residues: 3-ketoacyl-CoA thiolase (391 aa).

Cys-95 acts as the Acyl-thioester intermediate in catalysis. Catalysis depends on proton acceptor residues His-347 and Cys-377.

The protein belongs to the thiolase-like superfamily. Thiolase family. Heterotetramer of two alpha chains (FadB) and two beta chains (FadA).

It is found in the cytoplasm. It catalyses the reaction an acyl-CoA + acetyl-CoA = a 3-oxoacyl-CoA + CoA. Its pathway is lipid metabolism; fatty acid beta-oxidation. Its function is as follows. Catalyzes the final step of fatty acid oxidation in which acetyl-CoA is released and the CoA ester of a fatty acid two carbons shorter is formed. The chain is 3-ketoacyl-CoA thiolase from Pseudomonas putida (strain ATCC 700007 / DSM 6899 / JCM 31910 / BCRC 17059 / LMG 24140 / F1).